The chain runs to 78 residues: ATP synthase subunit c (78 aa).

The next 2 membrane-spanning stretches (helical) occupy residues phenylalanine 11–valine 31 and leucine 53–leucine 73.

The protein belongs to the ATPase C chain family. F-type ATPases have 2 components, F(1) - the catalytic core - and F(0) - the membrane proton channel. F(1) has five subunits: alpha(3), beta(3), gamma(1), delta(1), epsilon(1). F(0) has four main subunits: a(1), b(1), b'(1) and c(10-14). The alpha and beta chains form an alternating ring which encloses part of the gamma chain. F(1) is attached to F(0) by a central stalk formed by the gamma and epsilon chains, while a peripheral stalk is formed by the delta, b and b' chains.

The protein resides in the cell inner membrane. Functionally, f(1)F(0) ATP synthase produces ATP from ADP in the presence of a proton or sodium gradient. F-type ATPases consist of two structural domains, F(1) containing the extramembraneous catalytic core and F(0) containing the membrane proton channel, linked together by a central stalk and a peripheral stalk. During catalysis, ATP synthesis in the catalytic domain of F(1) is coupled via a rotary mechanism of the central stalk subunits to proton translocation. Key component of the F(0) channel; it plays a direct role in translocation across the membrane. A homomeric c-ring of between 10-14 subunits forms the central stalk rotor element with the F(1) delta and epsilon subunits. The polypeptide is ATP synthase subunit c (Cereibacter sphaeroides (strain ATCC 17025 / ATH 2.4.3) (Rhodobacter sphaeroides)).